The sequence spans 147 residues: Transthyretin (147 aa).

The first 20 residues, 1 to 20 (MASHRLLLLCLAGLVFVSEA), serve as a signal peptide directing secretion. Cysteine 30 carries the sulfocysteine modification. An L-thyroxine-binding site is contributed by lysine 35. The residue at position 62 (glutamate 62) is a 4-carboxyglutamate. At serine 72 the chain carries Phosphoserine. An L-thyroxine-binding site is contributed by glutamate 74. Residue asparagine 118 is glycosylated (N-linked (GlcNAc...) asparagine). Serine 137 contributes to the L-thyroxine binding site.

It belongs to the transthyretin family. As to quaternary structure, homotetramer. Dimer of dimers. In the homotetramer, subunits assemble around a central channel that can accommodate two ligand molecules. Interacts with RBP4. In terms of processing, sulfonation of the reactive cysteine Cys-30 enhances the stability of the native conformation of TTR, avoiding misassembly of the protein leading to amyloid formation. Detected in brain.

It localises to the secreted. Functionally, thyroid hormone-binding protein. Probably transports thyroxine from the bloodstream to the brain. This chain is Transthyretin (TTR), found in Pan troglodytes (Chimpanzee).